We begin with the raw amino-acid sequence, 342 residues long: tRNA N6-adenosine threonylcarbamoyltransferase (342 aa).

H112 and H116 together coordinate Fe cation. Substrate-binding positions include 134-138, D167, G180, and N278; that span reads IVSGG. Fe cation is bound at residue D306.

The protein belongs to the KAE1 / TsaD family. Fe(2+) serves as cofactor.

It is found in the cytoplasm. The catalysed reaction is L-threonylcarbamoyladenylate + adenosine(37) in tRNA = N(6)-L-threonylcarbamoyladenosine(37) in tRNA + AMP + H(+). Required for the formation of a threonylcarbamoyl group on adenosine at position 37 (t(6)A37) in tRNAs that read codons beginning with adenine. Is involved in the transfer of the threonylcarbamoyl moiety of threonylcarbamoyl-AMP (TC-AMP) to the N6 group of A37, together with TsaE and TsaB. TsaD likely plays a direct catalytic role in this reaction. This Anaplasma phagocytophilum (strain HZ) protein is tRNA N6-adenosine threonylcarbamoyltransferase.